Consider the following 153-residue polypeptide: Large ribosomal subunit protein uL22 (153 aa).

Residues 125–153 (EPKEARQARKKAKSGRPAAAAKSETEKGA) are disordered.

The protein belongs to the universal ribosomal protein uL22 family. Part of the 50S ribosomal subunit.

Its function is as follows. This protein binds specifically to 23S rRNA; its binding is stimulated by other ribosomal proteins, e.g. L4, L17, and L20. It is important during the early stages of 50S assembly. It makes multiple contacts with different domains of the 23S rRNA in the assembled 50S subunit and ribosome. Functionally, the globular domain of the protein is located near the polypeptide exit tunnel on the outside of the subunit, while an extended beta-hairpin is found that lines the wall of the exit tunnel in the center of the 70S ribosome. The protein is Large ribosomal subunit protein uL22 of Cutibacterium acnes (strain DSM 16379 / KPA171202) (Propionibacterium acnes).